Reading from the N-terminus, the 638-residue chain is DEAD-box ATP-dependent RNA helicase 52B (638 aa).

Composition is skewed to low complexity over residues 1 to 21 and 40 to 67; these read MRSSWADSAANAEESAPAAAA and GQAAPAAPAQAGALPSAAAAAQPSVGQP. The tract at residues 1–129 is disordered; the sequence is MRSSWADSAA…WDRRDREPDP (129 aa). Residues 79–112 are compositionally biased toward gly residues; it reads VNGGGGGGGGSVGGSRQGFGAGGRGGGGGGGGGA. Positions 119-128 are enriched in basic and acidic residues; sequence GWDRRDREPD. The Q motif signature appears at 169-197; that stretch reads NTFAEIDLGDALNENIRRCKYVKPTPVQR. The Helicase ATP-binding domain occupies 200 to 384; the sequence is IPISIAGRDL…SDFLADYIFL (185 aa). 213–220 is a binding site for ATP; it reads AQTGSGKT. The DEAD box signature appears at 328 to 331; sequence DEAD. One can recognise a Helicase C-terminal domain in the interval 411–562; that stretch reads YLMDLLHAQR…EVPQWLERYA (152 aa). A disordered region spans residues 565–638; the sequence is SSFGGGGGRN…GGQGFSSAWD (74 aa). A compositionally biased stretch (gly residues) spans 567 to 583; sequence FGGGGGRNRRSGGGARF. The span at 584–593 shows a compositional bias: basic and acidic residues; that stretch reads GGRDFRRDRG. Residues 594 to 632 are compositionally biased toward gly residues; sequence SGGGGYGGGGGGYGGGGYGGGGGGGGYGGGSSYGGGGQG.

The protein belongs to the DEAD box helicase family. DDX3/DED1 subfamily.

The catalysed reaction is ATP + H2O = ADP + phosphate + H(+). The protein is DEAD-box ATP-dependent RNA helicase 52B (PL10B) of Oryza sativa subsp. japonica (Rice).